We begin with the raw amino-acid sequence, 100 residues long: Tetrahydromethanopterin S-methyltransferase subunit B (100 aa).

A helical membrane pass occupies residues 80 to 100 (KLTNIVYGFILGLIILFALLL).

It belongs to the MtrB family. As to quaternary structure, the complex is composed of 8 subunits; MtrA, MtrB, MtrC, MtrD, MtrE, MtrF, MtrG and MtrH.

It is found in the cell membrane. The enzyme catalyses 5-methyl-5,6,7,8-tetrahydromethanopterin + coenzyme M + 2 Na(+)(in) = 5,6,7,8-tetrahydromethanopterin + methyl-coenzyme M + 2 Na(+)(out). It participates in one-carbon metabolism; methanogenesis from CO(2); methyl-coenzyme M from 5,10-methylene-5,6,7,8-tetrahydromethanopterin: step 2/2. Functionally, part of a complex that catalyzes the formation of methyl-coenzyme M and tetrahydromethanopterin from coenzyme M and methyl-tetrahydromethanopterin. This is an energy-conserving, sodium-ion translocating step. The chain is Tetrahydromethanopterin S-methyltransferase subunit B from Methanothermobacter marburgensis (strain ATCC BAA-927 / DSM 2133 / JCM 14651 / NBRC 100331 / OCM 82 / Marburg) (Methanobacterium thermoautotrophicum).